The primary structure comprises 111 residues: UPF0060 membrane protein Pden_1837 (111 aa).

Helical transmembrane passes span 7–27 (IAVY…FWAW), 30–50 (LGKS…FAWL), 62–82 (AYAA…WLTE), and 91–111 (ILGG…PRAA).

Belongs to the UPF0060 family.

The protein localises to the cell inner membrane. In Paracoccus denitrificans (strain Pd 1222), this protein is UPF0060 membrane protein Pden_1837.